A 359-amino-acid chain; its full sequence is MFESVVQLLEEHEELQQQLGDPELHADASRSRKVNRRYAELSRIVAAHAEWTQLGDDLAAARELAEEDPAFADEIPGLEQALDAAQEKLRRLLIPRDPDDARDVIMEIKMGEGGAESALFAADLLRMYLHYAESRRWKTEVLSQTQSDLGGYKDVQVAIKGTSDDPALGVWAHLKYEGGVHRVQRVPATESQGRIHTSAAGVLVIPEVEEVEEVAIDPNDLKIDVYRSSGPGGQSVNTTDSAVRITHLPTGIVVAMQNEKSQLQNREAGMRVLRARVLAKQQEEIDAEASAVRRSQIRTMDRSERIRTYNFPENRIADHRTGYKAYNLDAVMDGALDPVVESCIQADEEARLDALGTDA.

An N5-methylglutamine modification is found at Gln234.

It belongs to the prokaryotic/mitochondrial release factor family. Post-translationally, methylated by PrmC. Methylation increases the termination efficiency of RF1.

It localises to the cytoplasm. In terms of biological role, peptide chain release factor 1 directs the termination of translation in response to the peptide chain termination codons UAG and UAA. The chain is Peptide chain release factor 1 from Clavibacter michiganensis subsp. michiganensis (strain NCPPB 382).